A 63-amino-acid polypeptide reads, in one-letter code: Large ribosomal subunit protein uL29 (63 aa).

This sequence belongs to the universal ribosomal protein uL29 family.

This Neisseria meningitidis serogroup C (strain 053442) protein is Large ribosomal subunit protein uL29.